Reading from the N-terminus, the 236-residue chain is Ribosomal RNA small subunit methyltransferase G (236 aa).

Residues Gly-80, 131 to 132, and Arg-148 contribute to the S-adenosyl-L-methionine site; that span reads AE.

The protein belongs to the methyltransferase superfamily. RNA methyltransferase RsmG family.

The protein resides in the cytoplasm. Its function is as follows. Specifically methylates the N7 position of a guanine in 16S rRNA. The polypeptide is Ribosomal RNA small subunit methyltransferase G (Ureaplasma parvum serovar 3 (strain ATCC 27815 / 27 / NCTC 11736)).